The chain runs to 414 residues: 2,3-diketo-5-methylthiopentyl-1-phosphate enolase (414 aa).

Lysine 99 (proton acceptor) is an active-site residue. Substrate contacts are provided by residues lysine 148, 174–177 (KDDE), histidine 265, glycine 338, and 360–361 (GG). Residues lysine 174, aspartate 176, and glutamate 177 each contribute to the Mg(2+) site. Position 174 is an N6-carboxylysine (lysine 174).

The protein belongs to the RuBisCO large chain family. Type IV subfamily. Homodimer. The cofactor is Mg(2+).

It catalyses the reaction 5-methylsulfanyl-2,3-dioxopentyl phosphate = 2-hydroxy-5-methylsulfanyl-3-oxopent-1-enyl phosphate. It functions in the pathway amino-acid biosynthesis; L-methionine biosynthesis via salvage pathway; L-methionine from S-methyl-5-thio-alpha-D-ribose 1-phosphate: step 3/6. Functionally, catalyzes the enolization of 2,3-diketo-5-methylthiopentyl-1-phosphate (DK-MTP-1-P) into 2-hydroxy-3-keto-5-methylthiopentenyl-1-phosphate (HK-MTPenyl-1-P). This Bacillus cereus (strain B4264) protein is 2,3-diketo-5-methylthiopentyl-1-phosphate enolase.